We begin with the raw amino-acid sequence, 410 residues long: Phosphoglycerate kinase (410 aa).

Substrate contacts are provided by residues 19-21 (DLN), R34, 57-60 (HQGK), R114, and R154. Residues E332 and 358–361 (GGHS) contribute to the ATP site.

The protein belongs to the phosphoglycerate kinase family. As to quaternary structure, homodimer.

It localises to the cytoplasm. The catalysed reaction is (2R)-3-phosphoglycerate + ATP = (2R)-3-phospho-glyceroyl phosphate + ADP. The protein operates within carbohydrate degradation; glycolysis; pyruvate from D-glyceraldehyde 3-phosphate: step 2/5. This Pyrococcus horikoshii (strain ATCC 700860 / DSM 12428 / JCM 9974 / NBRC 100139 / OT-3) protein is Phosphoglycerate kinase (pgk).